Consider the following 661-residue polypeptide: Fusaric acid cluster transcription factor FUB12 (661 aa).

The segment at residues 17–48 (CVPCRTRKIKCNAAVVGLPCGSCVSRECPDEC) is a DNA-binding region (zn(2)-C6 fungal-type). Disordered regions lie at residues 57-131 (TVKG…RPPG) and 151-185 (SAAQ…QLDD). Over residues 73–98 (PDTNGSILSPRQQQLPTNVSRQTTDS) the composition is skewed to polar residues. Residues 99–109 (SHSDPVEESIH) show a composition bias toward basic and acidic residues. Positions 110–119 (ASHTGSSLRN) are enriched in polar residues. Basic and acidic residues predominate over residues 120–129 (DTPHSRDRRP).

It localises to the nucleus. Its function is as follows. Transcription factor that is involved in the formation of the two Fusaric acid derivatives, dehydrofusaric acid and fusarinolic acid, serving as a detoxification mechanism. This Gibberella fujikuroi (strain CBS 195.34 / IMI 58289 / NRRL A-6831) (Bakanae and foot rot disease fungus) protein is Fusaric acid cluster transcription factor FUB12.